A 339-amino-acid chain; its full sequence is D-alanine--D-alanine ligase (339 aa).

The region spanning 126 to 333 is the ATP-grasp domain; sequence KQVLASVGMP…YSELVTRLVE (208 aa). ATP is bound at residue 158–213; that stretch reads AGELGYPLFVKPANLGSSVGISKVSGPGELERALDLAFSLGRRVILEAMTAHKPRE. Residues Asp286, Glu300, and Asn302 each coordinate Mg(2+).

Belongs to the D-alanine--D-alanine ligase family. Requires Mg(2+) as cofactor. Mn(2+) serves as cofactor.

Its subcellular location is the cytoplasm. It catalyses the reaction 2 D-alanine + ATP = D-alanyl-D-alanine + ADP + phosphate + H(+). It functions in the pathway cell wall biogenesis; peptidoglycan biosynthesis. Its function is as follows. Cell wall formation. The sequence is that of D-alanine--D-alanine ligase from Deinococcus geothermalis (strain DSM 11300 / CIP 105573 / AG-3a).